A 160-amino-acid polypeptide reads, in one-letter code: SsrA-binding protein (160 aa).

Residues 131–160 (KKEYDKRDTEKARDSDREIQRAIRSKGKED) form a disordered region.

This sequence belongs to the SmpB family.

The protein resides in the cytoplasm. Required for rescue of stalled ribosomes mediated by trans-translation. Binds to transfer-messenger RNA (tmRNA), required for stable association of tmRNA with ribosomes. tmRNA and SmpB together mimic tRNA shape, replacing the anticodon stem-loop with SmpB. tmRNA is encoded by the ssrA gene; the 2 termini fold to resemble tRNA(Ala) and it encodes a 'tag peptide', a short internal open reading frame. During trans-translation Ala-aminoacylated tmRNA acts like a tRNA, entering the A-site of stalled ribosomes, displacing the stalled mRNA. The ribosome then switches to translate the ORF on the tmRNA; the nascent peptide is terminated with the 'tag peptide' encoded by the tmRNA and targeted for degradation. The ribosome is freed to recommence translation, which seems to be the essential function of trans-translation. The protein is SsrA-binding protein of Azotobacter vinelandii (strain DJ / ATCC BAA-1303).